A 137-amino-acid polypeptide reads, in one-letter code: Nucleoside diphosphate kinase (137 aa).

6 residues coordinate ATP: lysine 9, phenylalanine 57, arginine 85, threonine 91, arginine 102, and asparagine 112. Histidine 115 functions as the Pros-phosphohistidine intermediate in the catalytic mechanism.

Belongs to the NDK family. As to quaternary structure, homotetramer. The cofactor is Mg(2+).

It is found in the cytoplasm. The enzyme catalyses a 2'-deoxyribonucleoside 5'-diphosphate + ATP = a 2'-deoxyribonucleoside 5'-triphosphate + ADP. The catalysed reaction is a ribonucleoside 5'-diphosphate + ATP = a ribonucleoside 5'-triphosphate + ADP. Its function is as follows. Major role in the synthesis of nucleoside triphosphates other than ATP. The ATP gamma phosphate is transferred to the NDP beta phosphate via a ping-pong mechanism, using a phosphorylated active-site intermediate. The sequence is that of Nucleoside diphosphate kinase from Campylobacter jejuni subsp. jejuni serotype O:23/36 (strain 81-176).